The following is a 307-amino-acid chain: Oxygen-dependent coproporphyrinogen-III oxidase (307 aa).

Serine 99 contributes to the substrate binding site. Residues histidine 103 and histidine 113 each coordinate a divalent metal cation. Catalysis depends on histidine 113, which acts as the Proton donor. Position 115–117 (115–117) interacts with substrate; that stretch reads NVR. Positions 152 and 182 each coordinate a divalent metal cation. An important for dimerization region spans residues 247 to 282; it reads YVEFNLVFDRGTLFGLQSGGRTESILMSMPPVANWR. A substrate-binding site is contributed by 265–267; sequence GGR.

It belongs to the aerobic coproporphyrinogen-III oxidase family. As to quaternary structure, homodimer. Requires a divalent metal cation as cofactor.

The protein resides in the cytoplasm. The enzyme catalyses coproporphyrinogen III + O2 + 2 H(+) = protoporphyrinogen IX + 2 CO2 + 2 H2O. It functions in the pathway porphyrin-containing compound metabolism; protoporphyrin-IX biosynthesis; protoporphyrinogen-IX from coproporphyrinogen-III (O2 route): step 1/1. In terms of biological role, involved in the heme biosynthesis. Catalyzes the aerobic oxidative decarboxylation of propionate groups of rings A and B of coproporphyrinogen-III to yield the vinyl groups in protoporphyrinogen-IX. This chain is Oxygen-dependent coproporphyrinogen-III oxidase, found in Burkholderia multivorans (strain ATCC 17616 / 249).